The sequence spans 490 residues: Glutathione reductase (490 aa).

FAD contacts are provided by Ser19 and Gly20. Ser19 is a glutathione binding site. Residue Arg26 participates in glutathione binding. FAD contacts are provided by Glu39, Thr48, Cys49, and Lys57. Cysteines 49 and 54 form a disulfide. Tyr110 lines the glutathione pocket. Residue Ala126 participates in FAD binding. Residues Ala208, Ile211, Glu214, Arg231, and Arg237 each coordinate NADP(+). Residue Ser246 participates in glutathione binding. Gly297 contributes to the NADP(+) binding site. An FAD-binding site is contributed by Asp337. Glu343 lines the NADP(+) pocket. Thr345 is a binding site for FAD. Residue Arg353 participates in glutathione binding. An NADP(+)-binding site is contributed by Val379. Lys432 lines the glutathione pocket. Position 479 (His479) interacts with FAD. Residue His479 is the Proton acceptor of the active site.

The protein belongs to the class-I pyridine nucleotide-disulfide oxidoreductase family. Homodimer. FAD is required as a cofactor.

The protein localises to the cytoplasm. Its subcellular location is the mitochondrion. The enzyme catalyses 2 glutathione + NADP(+) = glutathione disulfide + NADPH + H(+). Its function is as follows. Catalyzes the reduction of glutathione disulfide (GSSG) to reduced glutathione (GSH). Constitutes the major mechanism to maintain a high GSH:GSSG ratio in the cytosol. This chain is Glutathione reductase (GLR1), found in Debaryomyces hansenii (strain ATCC 36239 / CBS 767 / BCRC 21394 / JCM 1990 / NBRC 0083 / IGC 2968) (Yeast).